Reading from the N-terminus, the 413-residue chain is Elongation factor 1-alpha (413 aa).

The region spanning 5-211 (KEHMNLAFIG…DDLEAPEKPV (207 aa)) is the tr-type G domain. A G1 region spans residues 14–21 (GHVDHGKS). GTP is bound at residue 14–21 (GHVDHGKS). S21 contacts Mg(2+). Residues 60–64 (GVTID) form a G2 region. Residues 81–84 (DCPG) form a G3 region. GTP-binding positions include 81 to 85 (DCPGH) and 136 to 139 (NKMD). The G4 stretch occupies residues 136–139 (NKMD). The interval 175 to 177 (SAF) is G5.

The protein belongs to the TRAFAC class translation factor GTPase superfamily. Classic translation factor GTPase family. EF-Tu/EF-1A subfamily.

Its subcellular location is the cytoplasm. The catalysed reaction is GTP + H2O = GDP + phosphate + H(+). Its function is as follows. GTP hydrolase that promotes the GTP-dependent binding of aminoacyl-tRNA to the A-site of ribosomes during protein biosynthesis. This is Elongation factor 1-alpha from Methanothermobacter thermautotrophicus (strain ATCC 29096 / DSM 1053 / JCM 10044 / NBRC 100330 / Delta H) (Methanobacterium thermoautotrophicum).